The sequence spans 35 residues: Photosystem II reaction center protein T (35 aa).

A helical transmembrane segment spans residues 3–23 (ALVYTFLLVSTLGIIFFAIFF).

Belongs to the PsbT family. PSII is composed of 1 copy each of membrane proteins PsbA, PsbB, PsbC, PsbD, PsbE, PsbF, PsbH, PsbI, PsbJ, PsbK, PsbL, PsbM, PsbT, PsbY, PsbZ, Psb30/Ycf12, at least 3 peripheral proteins of the oxygen-evolving complex and a large number of cofactors. It forms dimeric complexes.

The protein localises to the plastid. It localises to the chloroplast thylakoid membrane. Found at the monomer-monomer interface of the photosystem II (PS II) dimer, plays a role in assembly and dimerization of PSII. PSII is a light-driven water plastoquinone oxidoreductase, using light energy to abstract electrons from H(2)O, generating a proton gradient subsequently used for ATP formation. The protein is Photosystem II reaction center protein T of Bassia hyssopifolia (Fivehorn smotherweed).